A 367-amino-acid chain; its full sequence is Leu/Ile/Val-binding protein BraC3 (367 aa).

The first 22 residues, 1-22 (MTLKTLTATLVASLAFAPLAHA), serve as a signal peptide directing secretion.

It belongs to the leucine-binding protein family. As to quaternary structure, the complex is composed of two ATP-binding proteins (BraF and BraG), two transmembrane proteins (BraD and BraE) and a solute-binding protein (BraC or BraC3).

The protein resides in the periplasm. Part of the ABC transporter complex BraDEFGC/C3 involved in transport of branched-chain amino acids Leu, Ile and Val (LIV). Essential for the development of bacteroids, the differentiated legume-symbiotic forms of this bacterium, and for the effective N(2) fixation by them. The chain is Leu/Ile/Val-binding protein BraC3 from Rhizobium johnstonii (strain DSM 114642 / LMG 32736 / 3841) (Rhizobium leguminosarum bv. viciae).